A 224-amino-acid polypeptide reads, in one-letter code: Cardosin-E (224 aa).

Residues 1 to 221 (DSGSAIVALT…DYGNLLVGFA (221 aa)) form the Peptidase A1 domain. Asp35 is an active-site residue. A disulfide bond links Cys125 and Cys129. Asp134 is a catalytic residue.

Belongs to the peptidase A1 family. Heterodimer of a light chain and a heavy chain. An intermediate form is produced first, and undergoes proteolytic processing to remove the internal plant-specific insert (PSI) and the propeptide. In terms of processing, N-glycosylated. As to expression, pistils.

The protein resides in the microsome membrane. It localises to the protein storage vacuole. Its subcellular location is the secreted. The protein localises to the cell wall. It is found in the extracellular space. The protein resides in the extracellular matrix. With respect to regulation, inhibited by pepstatin. Its function is as follows. Aspartic protease with a high preference for bonds between hydrophobic residues. The sequence is that of Cardosin-E from Cynara cardunculus (Cardoon).